Reading from the N-terminus, the 295-residue chain is Small ribosomal subunit protein uS2 (295 aa).

The residue at position 2 (serine 2) is an N-acetylserine. Position 43 is a phosphoserine (serine 43). Lysine 52 carries the N6-acetyllysine modification. Residues 54 to 113 are interaction with PPP1R16B; it reads TWEKLLLAARAIVAIENPADVSVISSRNTGQRAVLKFAAATGATPIAGRFTPGTFTNQIQ. Residue lysine 89 is modified to N6-acetyllysine; alternate. A Glycyl lysine isopeptide (Lys-Gly) (interchain with G-Cter in SUMO2); alternate cross-link involves residue lysine 89. Threonine 97 carries the phosphothreonine modification. Laminin-binding stretches follow at residues 161–180 and 205–229; these read IPCN…MLAR and RDPE…EFQG. [DE]-W-[ST] repeat units follow at residues 230 to 232, 247 to 249, 266 to 268, 275 to 277, and 293 to 295; these read EWT, DWS, and EWS. Positions 242 to 295 are laminin-binding; that stretch reads QPEVADWSEGVQVPSVPIQQFPTEDWSAQPATEDWSAAPTAQATEWVGATTEWS. Positions 266-295 are disordered; that stretch reads DWSAQPATEDWSAAPTAQATEWVGATTEWS.

The protein belongs to the universal ribosomal protein uS2 family. In terms of assembly, monomer (37LRP) and homodimer (67LR). Component of the small ribosomal subunit. Mature ribosomes consist of a small (40S) and a large (60S) subunit. The 40S subunit contains about 33 different proteins and 1 molecule of RNA (18S). The 60S subunit contains about 49 different proteins and 3 molecules of RNA (28S, 5.8S and 5S). Interacts with RPS21. Interacts with several laminins including at least LAMB1. Interacts with MDK. The mature dimeric form interacts with PPP1R16B (via its fourth ankyrin repeat). Interacts with PPP1CA only in the presence of PPP1R16B. In terms of processing, acylated. Acylation may be a prerequisite for conversion of the monomeric 37 kDa laminin receptor precursor (37LRP) to the mature dimeric 67 kDa laminin receptor (67LR), and may provide a mechanism for membrane association. Cleaved by stromelysin-3 (ST3) at the cell surface. Cleavage by stromelysin-3 may be a mechanism to alter cell-extracellular matrix interactions. Expressed in most neurons and in a subset of glial cells. The overall distribution of LR correlates with that reported for laminin-1 but also with brain regions classically associated with prion-related neurodegeneration.

It localises to the cell membrane. The protein localises to the cytoplasm. The protein resides in the nucleus. Required for the assembly and/or stability of the 40S ribosomal subunit. Required for the processing of the 20S rRNA-precursor to mature 18S rRNA in a late step of the maturation of 40S ribosomal subunits. Also functions as a cell surface receptor for laminin. Plays a role in cell adhesion to the basement membrane and in the consequent activation of signaling transduction pathways. May play a role in cell fate determination and tissue morphogenesis. Also acts as a receptor for several other ligands, including the pathogenic prion protein, viruses, and bacteria. Acts as a PPP1R16B-dependent substrate of PPP1CA. This is Small ribosomal subunit protein uS2 (Rpsa) from Rattus norvegicus (Rat).